The chain runs to 163 residues: Nucleotide-binding protein MAV_4575 (163 aa).

Belongs to the YajQ family.

Functionally, nucleotide-binding protein. In Mycobacterium avium (strain 104), this protein is Nucleotide-binding protein MAV_4575.